Consider the following 430-residue polypeptide: Tol-Pal system protein TolB (430 aa).

A signal peptide spans M1–A19.

This sequence belongs to the TolB family. The Tol-Pal system is composed of five core proteins: the inner membrane proteins TolA, TolQ and TolR, the periplasmic protein TolB and the outer membrane protein Pal. They form a network linking the inner and outer membranes and the peptidoglycan layer.

Its subcellular location is the periplasm. In terms of biological role, part of the Tol-Pal system, which plays a role in outer membrane invagination during cell division and is important for maintaining outer membrane integrity. In Hahella chejuensis (strain KCTC 2396), this protein is Tol-Pal system protein TolB.